The primary structure comprises 78 residues: U-scoloptoxin(04)-Er1a (78 aa).

Residues 1–24 (MTRHLIFAAVLLVCLFVCWNAIGA) form the signal peptide. Positions 25–28 (QDAR) are excised as a propeptide.

Belongs to the scoloptoxin-04 family. Contains 2 disulfide bonds. In terms of tissue distribution, expressed by the venom gland.

It localises to the secreted. The protein is U-scoloptoxin(04)-Er1a of Ethmostigmus rubripes (Giant centipede).